A 694-amino-acid polypeptide reads, in one-letter code: Inactive protein-arginine deiminase type-6 (694 aa).

2 positions are modified to phosphoserine: serine 10 and serine 446.

It belongs to the protein arginine deiminase family. In terms of assembly, homodimers. Associates with alpha-tubulin. In terms of processing, phosphorylation at Ser-10, possibly by RSK-type kinases, and Ser-446 creates binding sites for 14-3-3 proteins. As to expression, highly expressed in oocytes and weakly expressed in other somatic tissues.

The protein resides in the cytoplasm. Its subcellular location is the cytoplasmic vesicle. It localises to the secretory vesicle. It is found in the cortical granule. The protein localises to the nucleus. Structural constituent of cytoplasmic lattices, which plays a key role in early embryonic development. Cytoplasmic lattices consist in fibrous structures found in the cytoplasm of oocytes and preimplantation embryos. They are required to store maternal proteins critical for embryonic development, such as ribosomal proteins and proteins that control epigenetic reprogramming of the preimplantation embryo, and prevent their degradation or activation. In contrast to other members of the family, does not show protein-arginine deiminase activity due to its inability to bind Ca(2+). The polypeptide is Inactive protein-arginine deiminase type-6 (Homo sapiens (Human)).